We begin with the raw amino-acid sequence, 220 residues long: WAP four-disulfide core domain protein 1 (220 aa).

The signal sequence occupies residues 1 to 31; that stretch reads MPLTGVGPGSCRRQIIRALCLLLLLLHAGSA. Residues 46–70 form a disordered region; sequence KSRAEEAGAPGGPRQPRADRCPPPP. A WAP domain is found at 59-108; it reads RQPRADRCPPPPRTLPPGACQAARCQADSECPRHRRCCYNGCAYACLEAV. 4 disulfide bridges follow: Cys66-Cys96, Cys78-Cys100, Cys83-Cys95, and Cys89-Cys104. The interval 199–220 is disordered; the sequence is EYPEGDSKNVAEPGRGQQKHFQ.

The protein localises to the secreted. Functionally, has growth inhibitory activity. The chain is WAP four-disulfide core domain protein 1 (WFDC1) from Homo sapiens (Human).